Reading from the N-terminus, the 212-residue chain is Small ribosomal subunit protein uS5 (212 aa).

Residues 1-42 (MPGRERRDGGRSADKNDNNKGRNDRGRNDRNNRRGRGRDDDR) form a disordered region. The region spanning 45 to 108 (YIERVVTINR…EEARKNFFRV (64 aa)) is the S5 DRBM domain.

It belongs to the universal ribosomal protein uS5 family. As to quaternary structure, part of the 30S ribosomal subunit. Contacts proteins S4 and S8.

In terms of biological role, with S4 and S12 plays an important role in translational accuracy. Functionally, located at the back of the 30S subunit body where it stabilizes the conformation of the head with respect to the body. The chain is Small ribosomal subunit protein uS5 from Corynebacterium kroppenstedtii (strain DSM 44385 / JCM 11950 / CIP 105744 / CCUG 35717).